The primary structure comprises 821 residues: Dapper homolog 1 (821 aa).

Residues L88–T136 adopt a coiled-coil conformation. Disordered regions lie at residues S288–H312, Q386–N432, N564–R615, and E627–K655. Positions A388–P400 are enriched in low complexity. Residues Q401–N432 are compositionally biased toward polar residues. Composition is skewed to basic residues over residues D584–T593, H601–R615, and A639–H649. The PDZ-binding signature appears at M818 to V821.

It belongs to the dapper family. Interacts with dvl2.

It localises to the cytoplasm. Involved in regulation of intracellular signaling pathways during development. Specifically thought to play a role in canonical and/or non-canonical Wnt signaling pathways through interaction with DSH (Dishevelled) family proteins. Binds to dvl2 and may regulate the degradation of ctnnb1/beta-catenin, thereby modulating the transcriptional activation of target genes of the Wnt signaling pathway. Seems to activate the canonical Wnt signaling pathway. This chain is Dapper homolog 1 (dact1), found in Danio rerio (Zebrafish).